The primary structure comprises 392 residues: Phosphoglycerate kinase (392 aa).

Substrate is bound by residues 21–23 (DFN), R36, 59–62 (HLGR), R117, and R150. ATP is bound by residues K200, G288, E319, and 345-348 (GGDS).

This sequence belongs to the phosphoglycerate kinase family. Monomer.

The protein localises to the cytoplasm. The catalysed reaction is (2R)-3-phosphoglycerate + ATP = (2R)-3-phospho-glyceroyl phosphate + ADP. The protein operates within carbohydrate degradation; glycolysis; pyruvate from D-glyceraldehyde 3-phosphate: step 2/5. In Rubrobacter xylanophilus (strain DSM 9941 / JCM 11954 / NBRC 16129 / PRD-1), this protein is Phosphoglycerate kinase.